Here is a 594-residue protein sequence, read N- to C-terminus: DNA mismatch repair protein MutL (594 aa).

It belongs to the DNA mismatch repair MutL/HexB family.

Functionally, this protein is involved in the repair of mismatches in DNA. It is required for dam-dependent methyl-directed DNA mismatch repair. May act as a 'molecular matchmaker', a protein that promotes the formation of a stable complex between two or more DNA-binding proteins in an ATP-dependent manner without itself being part of a final effector complex. The protein is DNA mismatch repair protein MutL of Tolumonas auensis (strain DSM 9187 / NBRC 110442 / TA 4).